The sequence spans 741 residues: 1,4-alpha-glucan branching enzyme GlgB (741 aa).

Aspartate 420 (nucleophile) is an active-site residue. The active-site Proton donor is glutamate 473.

It belongs to the glycosyl hydrolase 13 family. GlgB subfamily. As to quaternary structure, monomer.

It carries out the reaction Transfers a segment of a (1-&gt;4)-alpha-D-glucan chain to a primary hydroxy group in a similar glucan chain.. The protein operates within glycan biosynthesis; glycogen biosynthesis. Functionally, catalyzes the formation of the alpha-1,6-glucosidic linkages in glycogen by scission of a 1,4-alpha-linked oligosaccharide from growing alpha-1,4-glucan chains and the subsequent attachment of the oligosaccharide to the alpha-1,6 position. This is 1,4-alpha-glucan branching enzyme GlgB from Pseudomonas syringae pv. tomato (strain ATCC BAA-871 / DC3000).